The sequence spans 348 residues: Zinc-type alcohol dehydrogenase-like protein C2E1P3.01 (348 aa).

This sequence belongs to the zinc-containing alcohol dehydrogenase family. Quinone oxidoreductase subfamily.

It localises to the mitochondrion. The sequence is that of Zinc-type alcohol dehydrogenase-like protein C2E1P3.01 from Schizosaccharomyces pombe (strain 972 / ATCC 24843) (Fission yeast).